A 377-amino-acid polypeptide reads, in one-letter code: Lipoyl synthase, mitochondrial (377 aa).

[4Fe-4S] cluster is bound by residues Cys-103, Cys-108, Cys-114, Cys-134, Cys-138, Cys-141, and Ser-349. The Radical SAM core domain maps to 119–338 (EHGTQTATIM…EERGNELGFL (220 aa)).

It belongs to the radical SAM superfamily. Lipoyl synthase family. Requires [4Fe-4S] cluster as cofactor.

The protein resides in the mitochondrion. It catalyses the reaction [[Fe-S] cluster scaffold protein carrying a second [4Fe-4S](2+) cluster] + N(6)-octanoyl-L-lysyl-[protein] + 2 oxidized [2Fe-2S]-[ferredoxin] + 2 S-adenosyl-L-methionine + 4 H(+) = [[Fe-S] cluster scaffold protein] + N(6)-[(R)-dihydrolipoyl]-L-lysyl-[protein] + 4 Fe(3+) + 2 hydrogen sulfide + 2 5'-deoxyadenosine + 2 L-methionine + 2 reduced [2Fe-2S]-[ferredoxin]. It functions in the pathway protein modification; protein lipoylation via endogenous pathway; protein N(6)-(lipoyl)lysine from octanoyl-[acyl-carrier-protein]: step 2/2. In terms of biological role, catalyzes the radical-mediated insertion of two sulfur atoms into the C-6 and C-8 positions of the octanoyl moiety bound to the lipoyl domains of lipoate-dependent enzymes, thereby converting the octanoylated domains into lipoylated derivatives. The protein is Lipoyl synthase, mitochondrial of Drosophila melanogaster (Fruit fly).